A 625-amino-acid polypeptide reads, in one-letter code: ATP-binding cassette sub-family F member 2 (625 aa).

Residues 1-54 (MPSDLAKKKAAKKKEAAKARQRPRKGHEENGDAITEPQVAEERNEEANGRETTE) form a disordered region. The segment covering 40 to 54 (AEERNEEANGRETTE) has biased composition (basic and acidic residues). ABC transporter domains follow at residues 88–327 (AHII…ENQM) and 398–615 (IMVQ…VGEE). 120 to 127 (GLNGIGKS) is a binding site for ATP. The residue at position 220 (T220) is a Phosphothreonine. The residue at position 306 (K306) is an N6-acetyllysine. 432-439 (GPNGAGKS) contributes to the ATP binding site. At S514 the chain carries Phosphoserine.

It belongs to the ABC transporter superfamily. ABCF family. EF3 subfamily.

The sequence is that of ATP-binding cassette sub-family F member 2 (ABCF2) from Bos taurus (Bovine).